The chain runs to 548 residues: CTP synthase (548 aa).

The interval 1 to 265 (MTRYIFVTGG…DDIICDKLRI (265 aa)) is amidoligase domain. CTP is bound at residue Ser-13. Position 13 (Ser-13) interacts with UTP. Residues 14 to 19 (SLGKGI) and Asp-71 each bind ATP. Mg(2+) contacts are provided by Asp-71 and Glu-139. CTP is bound by residues 146–148 (DIE), 186–191 (KTKPTQ), and Lys-222. Residues 186 to 191 (KTKPTQ) and Lys-222 each bind UTP. The 252-residue stretch at 290-541 (NIAMVGKYME…VNAALAYKAA (252 aa)) folds into the Glutamine amidotransferase type-1 domain. An L-glutamine-binding site is contributed by Gly-351. Cys-378 acts as the Nucleophile; for glutamine hydrolysis in catalysis. Residues 379-382 (LGMQ), Glu-402, and Arg-469 contribute to the L-glutamine site. Catalysis depends on residues His-514 and Glu-516.

This sequence belongs to the CTP synthase family. In terms of assembly, homotetramer.

The catalysed reaction is UTP + L-glutamine + ATP + H2O = CTP + L-glutamate + ADP + phosphate + 2 H(+). The enzyme catalyses L-glutamine + H2O = L-glutamate + NH4(+). It carries out the reaction UTP + NH4(+) + ATP = CTP + ADP + phosphate + 2 H(+). The protein operates within pyrimidine metabolism; CTP biosynthesis via de novo pathway; CTP from UDP: step 2/2. With respect to regulation, allosterically activated by GTP, when glutamine is the substrate; GTP has no effect on the reaction when ammonia is the substrate. The allosteric effector GTP functions by stabilizing the protein conformation that binds the tetrahedral intermediate(s) formed during glutamine hydrolysis. Inhibited by the product CTP, via allosteric rather than competitive inhibition. In terms of biological role, catalyzes the ATP-dependent amination of UTP to CTP with either L-glutamine or ammonia as the source of nitrogen. Regulates intracellular CTP levels through interactions with the four ribonucleotide triphosphates. The polypeptide is CTP synthase (Chromohalobacter salexigens (strain ATCC BAA-138 / DSM 3043 / CIP 106854 / NCIMB 13768 / 1H11)).